Consider the following 672-residue polypeptide: DNA ligase (672 aa).

NAD(+) is bound by residues 37–41 (DAEYD), 86–87 (SL), and Glu-115. Residue Lys-117 is the N6-AMP-lysine intermediate of the active site. Arg-138, Glu-172, Lys-288, and Lys-312 together coordinate NAD(+). Zn(2+) is bound by residues Cys-406, Cys-409, Cys-424, and Cys-429. The BRCT domain occupies 590 to 672 (DISSTFAGKT…LQEIQQSKQV (83 aa)).

This sequence belongs to the NAD-dependent DNA ligase family. LigA subfamily. Requires Mg(2+) as cofactor. Mn(2+) serves as cofactor.

The enzyme catalyses NAD(+) + (deoxyribonucleotide)n-3'-hydroxyl + 5'-phospho-(deoxyribonucleotide)m = (deoxyribonucleotide)n+m + AMP + beta-nicotinamide D-nucleotide.. Its function is as follows. DNA ligase that catalyzes the formation of phosphodiester linkages between 5'-phosphoryl and 3'-hydroxyl groups in double-stranded DNA using NAD as a coenzyme and as the energy source for the reaction. It is essential for DNA replication and repair of damaged DNA. This is DNA ligase from Anoxybacillus flavithermus (strain DSM 21510 / WK1).